We begin with the raw amino-acid sequence, 1164 residues long: DNA-directed RNA polymerase subunit beta (1164 aa).

Disordered regions lie at residues 975 to 994 and 1143 to 1164; these read RSSLPNRDGERQVDDFGKSN and ANAALGINLSRDERPDADMDVS. 2 stretches are compositionally biased toward basic and acidic residues: residues 981 to 991 and 1152 to 1164; these read RDGERQVDDFG and SRDERPDADMDVS.

This sequence belongs to the RNA polymerase beta chain family. In terms of assembly, the RNAP catalytic core consists of 2 alpha, 1 beta, 1 beta' and 1 omega subunit. When a sigma factor is associated with the core the holoenzyme is formed, which can initiate transcription.

The catalysed reaction is RNA(n) + a ribonucleoside 5'-triphosphate = RNA(n+1) + diphosphate. Functionally, DNA-dependent RNA polymerase catalyzes the transcription of DNA into RNA using the four ribonucleoside triphosphates as substrates. This Corynebacterium jeikeium (strain K411) protein is DNA-directed RNA polymerase subunit beta.